Reading from the N-terminus, the 396-residue chain is 1-deoxy-D-xylulose 5-phosphate reductoisomerase (396 aa).

Residues T10, G11, S12, I13, and N123 each coordinate NADPH. K124 lines the 1-deoxy-D-xylulose 5-phosphate pocket. An NADPH-binding site is contributed by E125. D149 contributes to the Mn(2+) binding site. 1-deoxy-D-xylulose 5-phosphate-binding residues include S150, E151, S185, and H208. Residue E151 participates in Mn(2+) binding. Position 214 (G214) interacts with NADPH. Positions 221, 226, 227, and 230 each coordinate 1-deoxy-D-xylulose 5-phosphate. E230 contributes to the Mn(2+) binding site.

Belongs to the DXR family. It depends on Mg(2+) as a cofactor. The cofactor is Mn(2+).

The enzyme catalyses 2-C-methyl-D-erythritol 4-phosphate + NADP(+) = 1-deoxy-D-xylulose 5-phosphate + NADPH + H(+). It functions in the pathway isoprenoid biosynthesis; isopentenyl diphosphate biosynthesis via DXP pathway; isopentenyl diphosphate from 1-deoxy-D-xylulose 5-phosphate: step 1/6. Its function is as follows. Catalyzes the NADPH-dependent rearrangement and reduction of 1-deoxy-D-xylulose-5-phosphate (DXP) to 2-C-methyl-D-erythritol 4-phosphate (MEP). In Shewanella baltica (strain OS223), this protein is 1-deoxy-D-xylulose 5-phosphate reductoisomerase.